The sequence spans 256 residues: Protein crossbronx-like (256 aa).

In terms of domain architecture, UBC core spans 17–179; that stretch reads NQGYQVLAEY…AKASIVWSWK (163 aa).

It belongs to the ubiquitin-conjugating enzyme family. FTS subfamily.

The polypeptide is Protein crossbronx-like (Drosophila mojavensis (Fruit fly)).